Reading from the N-terminus, the 238-residue chain is Probable transcriptional regulatory protein YeeN (238 aa).

Belongs to the TACO1 family. YeeN subfamily.

It is found in the cytoplasm. The sequence is that of Probable transcriptional regulatory protein YeeN from Salmonella choleraesuis (strain SC-B67).